Consider the following 30-residue polypeptide: GIPCGESCVYIPCLTSAVGCSCKSKVCYRN.

The cyclopeptide (Gly-Asn) cross-link spans 1–30 (GIPCGESCVYIPCLTSAVGCSCKSKVCYRN). 3 cysteine pairs are disulfide-bonded: C4-C20, C8-C22, and C13-C27.

This is a cyclic peptide. Expressed in petals and roots but not in leaves, petioles and runners (at protein level).

Functionally, probably participates in a plant defense mechanism. This Viola odorata (Sweet violet) protein is Cycloviolacin-O10.